We begin with the raw amino-acid sequence, 568 residues long: Phosphoprotein (568 aa).

2 disordered regions span residues 1-23 (MDQD…GGRE) and 38-320 (SEPT…GIGE). The segment covering 7 to 20 (ILKEDSEVEREAPG) has biased composition (basic and acidic residues). The N0 binding stretch occupies residues 33–41 (DAVLSSEPT). Residues 50-59 (LHNTINTPQG) show a composition bias toward polar residues. A Phosphoserine; by host modification is found at serine 68. Residues 83–101 (RSGEESRVSGRTSKPEAEA) are compositionally biased toward basic and acidic residues. Serine 125 carries the post-translational modification Phosphoserine; by host. A compositionally biased stretch (basic and acidic residues) spans 150 to 168 (GIEDENREMAAHPDKRGED). Residues 191 to 206 (ASNNGRSMEPGSSHSA) show a composition bias toward polar residues. Residues serine 192, serine 249, serine 257, and serine 260 each carry the phosphoserine; by host modification. The interval 344-411 (FESSRDASYV…SFRDIYKRFS (68 aa)) is multimerization. The stretch at 364–429 (YAEMTFNVCG…LLMSNLSTLH (66 aa)) forms a coiled coil. The tract at residues 412–445 (EYQKEQNSLLMSNLSTLHIITDRGGKTDNTDSLT) is l protein binding. Serine 447 and serine 449 each carry phosphoserine; by host. Residues 479 to 568 (DLIREDEFRD…VEEDIESLTN (90 aa)) form an interaction with the nucleocapsid (N-RNA) region. The disordered stretch occupies residues 496–516 (QERDTEPRASNASRLLPSKEK). Positions 547–566 (KTDQEVKAVMELVEEDIESL) are formation of N-RNA complex involved in transcription and replication.

The protein belongs to the respirovirus P protein family. As to quaternary structure, homotetramer. Interacts (via multimerization domain) with polymerase L; this interaction forms the polymerase complex. Interacts (via N-terminus) with N0; this interaction allows P to chaperon N0 before encapsidation and form the N-P complex. Interacts (via C-terminus) with N-RNA template; this interaction positions the polymerase on the template. In terms of processing, phosphorylated by PKC/PRKCZ, and other unknown kinases. Phosphorylation is necessary for viral transcription and replication. The N-terminus contains the majority of phosphorylated sites. Ser-249 is the major site of phosphorylation, but is not necessary for most functions.

Its subcellular location is the host cytoplasm. Its function is as follows. Essential cofactor of the RNA polymerase L that plays a central role in the transcription and replication by forming the polymerase complex with RNA polymerase L and recruiting L to the genomic N-RNA template for RNA synthesis. Also plays a central role in the encapsidation of nascent RNA chains by forming the encapsidation complex with the nucleocapsid protein N (N-P complex). Acts as a chaperone for newly synthesized free N protein, so-called N0, allowing encapsidation of nascent RNA chains during replication. The nucleoprotein protein N prevents excessive phosphorylation of P, which leads to down-regulation of viral transcription/ replication. Participates, together with N, in the formation of viral factories (viroplasms), which are large inclusions in the host cytoplasm where replication takes place. Recruits host PI4KB and remodel the host endoplasmic reticulum membrane to form viral replication factories. In Cavia cutleri (Guinea pig), this protein is Phosphoprotein (P/V/C).